The chain runs to 199 residues: FMN-dependent NADH:quinone oxidoreductase (199 aa).

Residues Ser10, 16–18 (SVS), and 96–99 (MYNF) contribute to the FMN site.

The protein belongs to the azoreductase type 1 family. As to quaternary structure, homodimer. FMN serves as cofactor.

The catalysed reaction is 2 a quinone + NADH + H(+) = 2 a 1,4-benzosemiquinone + NAD(+). It carries out the reaction N,N-dimethyl-1,4-phenylenediamine + anthranilate + 2 NAD(+) = 2-(4-dimethylaminophenyl)diazenylbenzoate + 2 NADH + 2 H(+). Its function is as follows. Quinone reductase that provides resistance to thiol-specific stress caused by electrophilic quinones. Also exhibits azoreductase activity. Catalyzes the reductive cleavage of the azo bond in aromatic azo compounds to the corresponding amines. The polypeptide is FMN-dependent NADH:quinone oxidoreductase (Azotobacter vinelandii (strain DJ / ATCC BAA-1303)).